Consider the following 608-residue polypeptide: Actin-related protein 8 (608 aa).

A disordered region spans residues 1 to 20 (MQRSRASSTSSGRLQASQQV). 272–275 (DIGA) is an ATP binding site.

It belongs to the actin family. ARP8 subfamily. In terms of assembly, component of the chromatin remodeling Ino80 complex. Exists as monomers and dimers, but the dimer is most probably the biologically relevant form required for stable interactions with histones that exploits the twofold symmetry of the nucleosome core.

The protein localises to the nucleus. Functionally, plays an important role in the functional organization of mitotic chromosomes. Exhibits low basal ATPase activity, and unable to polymerize. In terms of biological role, proposed core component of the chromatin remodeling INO80 complex which is involved in transcriptional regulation, DNA replication and probably DNA repair. Strongly prefer nucleosomes and H3-H4 tetramers over H2A-H2B dimers, suggesting it may act as a nucleosome recognition module within the complex. This chain is Actin-related protein 8, found in Drosophila pseudoobscura pseudoobscura (Fruit fly).